The sequence spans 1397 residues: Clustered mitochondria protein homolog (1397 aa).

One copy of the TPR 1 repeat lies at 30–63 (LPSFIDQKGDLKIPSHYEETITDLKLTLTVIPKT). Disordered regions lie at residues 158–203 (TARG…LSRE) and 526–555 (DAAP…DEEE). Over residues 161–203 (GEAEKSDTNEEEQEQGKGKVGKPNEKESGETKETDSQPELSRE) the composition is skewed to basic and acidic residues. Residues 368–640 (DSSRSQLMLI…RTTPRDIEFI (273 aa)) enclose the Clu domain. One copy of the TPR 2 repeat lies at 559-595 (EKVLYGLSSDSQKILEDKSFEKPLKLLSEVFHLKPHG). 4 stretches are compositionally biased toward basic and acidic residues: residues 686–703 (EGKL…EEKS), 812–831 (EKVE…KERA), 839–860 (SDDK…NTES), and 1019–1033 (QREQ…NVEK). 3 disordered regions span residues 686-707 (EGKL…QIAL), 812-869 (EKVE…EEQP), and 1019-1050 (QREQ…PIEN). A compositionally biased stretch (basic residues) spans 1034–1043 (KHSKKSKKKS). TPR repeat units lie at residues 1167-1200 (IAAY…WTST) and 1209-1242 (VNLL…CSHL). Composition is skewed to polar residues over residues 1314–1338 (AQSK…SQAS) and 1362–1373 (PQSDPQIANQSV). The disordered stretch occupies residues 1314 to 1397 (AQSKKSPPPT…AKSKSKHTKA (84 aa)). Residues 1375-1384 (DILKFIEGKS) show a composition bias toward basic and acidic residues. Residues 1386–1397 (PNAKSKSKHTKA) are compositionally biased toward basic residues.

Belongs to the CLU family. In terms of assembly, may associate with the eukaryotic translation initiation factor 3 (eIF-3) complex.

The protein resides in the cytoplasm. In terms of biological role, mRNA-binding protein involved in proper cytoplasmic distribution of mitochondria. The chain is Clustered mitochondria protein homolog from Lodderomyces elongisporus (strain ATCC 11503 / CBS 2605 / JCM 1781 / NBRC 1676 / NRRL YB-4239) (Yeast).